Consider the following 194-residue polypeptide: Holliday junction branch migration complex subunit RuvA (194 aa).

The segment at 1–64 (MIGRLRGILA…EDSVALYGFL (64 aa)) is domain I. The tract at residues 65–140 (REGERRLFRD…RAADFSSGAP (76 aa)) is domain II. The segment at 140–144 (PITGQ) is flexible linker. A domain III region spans residues 145–194 (LGPDAVSEATVALQQLGYKPAEAARMARDAGAEGDEVATVIRKALQAALR).

It belongs to the RuvA family. In terms of assembly, homotetramer. Forms an RuvA(8)-RuvB(12)-Holliday junction (HJ) complex. HJ DNA is sandwiched between 2 RuvA tetramers; dsDNA enters through RuvA and exits via RuvB. An RuvB hexamer assembles on each DNA strand where it exits the tetramer. Each RuvB hexamer is contacted by two RuvA subunits (via domain III) on 2 adjacent RuvB subunits; this complex drives branch migration. In the full resolvosome a probable DNA-RuvA(4)-RuvB(12)-RuvC(2) complex forms which resolves the HJ.

The protein localises to the cytoplasm. The RuvA-RuvB-RuvC complex processes Holliday junction (HJ) DNA during genetic recombination and DNA repair, while the RuvA-RuvB complex plays an important role in the rescue of blocked DNA replication forks via replication fork reversal (RFR). RuvA specifically binds to HJ cruciform DNA, conferring on it an open structure. The RuvB hexamer acts as an ATP-dependent pump, pulling dsDNA into and through the RuvAB complex. HJ branch migration allows RuvC to scan DNA until it finds its consensus sequence, where it cleaves and resolves the cruciform DNA. The polypeptide is Holliday junction branch migration complex subunit RuvA (Xanthomonas euvesicatoria pv. vesicatoria (strain 85-10) (Xanthomonas campestris pv. vesicatoria)).